The chain runs to 363 residues: tRNA U34 carboxymethyltransferase (363 aa).

Residues Lys-101, Trp-134, Lys-139, Gly-159, 181 to 183, 221 to 222, Met-237, Tyr-241, and Arg-356 each bind carboxy-S-adenosyl-L-methionine; these read DPS and LE.

The protein belongs to the class I-like SAM-binding methyltransferase superfamily. CmoB family. In terms of assembly, homotetramer.

It catalyses the reaction carboxy-S-adenosyl-L-methionine + 5-hydroxyuridine(34) in tRNA = 5-carboxymethoxyuridine(34) in tRNA + S-adenosyl-L-homocysteine + H(+). In terms of biological role, catalyzes carboxymethyl transfer from carboxy-S-adenosyl-L-methionine (Cx-SAM) to 5-hydroxyuridine (ho5U) to form 5-carboxymethoxyuridine (cmo5U) at position 34 in tRNAs. In Psychrobacter cryohalolentis (strain ATCC BAA-1226 / DSM 17306 / VKM B-2378 / K5), this protein is tRNA U34 carboxymethyltransferase.